The chain runs to 493 residues: uncharacterized protein (493 aa).

Ser-328 carries the phosphoserine modification. Polar residues predominate over residues 466–486; that stretch reads AESNSGRGQNSKTKTTSVNLS. The segment at 466 to 493 is disordered; sequence AESNSGRGQNSKTKTTSVNLSRNKRTRT.

This is an uncharacterized protein from Schizosaccharomyces pombe (strain 972 / ATCC 24843) (Fission yeast).